Here is a 1697-residue protein sequence, read N- to C-terminus: Phosphatidylinositol 3-kinase 3 (1697 aa).

Disordered regions lie at residues 57 to 91 (RSINNNNNNNNNNNNNNNNNNNNNNNNNNNNTQPC), 169 to 229 (INNN…DSSI), 244 to 279 (KTTETKETSTGTSPLEKSPSKGFIISPKKPEEENEI), 310 to 376 (KKNN…NSVG), 398 to 428 (SWTSSKPTSSSIGFASSPQNNGKPLNISGSS), and 440 to 504 (DLLK…NNDE). Low complexity-rich tracts occupy residues 60-87 (NNNNNNNNNNNNNNNNNNNNNNNNNNNN), 170-196 (NNNNNNNNNNNNNNNNNNNNNNNNNNN), and 212-222 (NNNSNNNNNIN). Composition is skewed to low complexity over residues 312-374 (NNNN…TTNS) and 398-408 (SWTSSKPTSSS). Polar residues-rich tracts occupy residues 409-428 (IGFASSPQNNGKPLNISGSS) and 444-456 (SPSSSPPTQSDIF). Residues 457-503 (NENNNNNNNNNNNNNNNNNNNNNNNNNNNNNNNNEELINNNNNNNND) show a composition bias toward low complexity. The PI3K-RBD domain maps to 737-823 (PEFFVIRVHL…KGEIDLTMVE (87 aa)). Residues 888–1036 (VTENLQVRLL…QAIIIAFEFK (149 aa)) form the C2 PI3K-type domain. Positions 1060 to 1238 (GNELPVVTME…RVLSSGFLRY (179 aa)) constitute a PIK helical domain. One can recognise a PI3K/PI4K catalytic domain in the interval 1304-1581 (IPEKCKSMDS…LIHESIGTLT (278 aa)). The segment at 1310–1316 (SMDSAKV) is G-loop. The tract at residues 1447 to 1455 (GIGDRHNDN) is catalytic loop. Positions 1466–1492 (HIDFGHFLGNFKTFAGFQREKAPFVLT) are activation loop. Positions 1609-1625 (ASSLNLNKNKPSSQSKL) are enriched in low complexity. The segment at 1609-1697 (ASSLNLNKNK…DTEKENSIDK (89 aa)) is disordered. Repeat copies occupy residues 1622–1626 (QSKLD), 1627–1631 (LSRSD), 1632–1636 (LSRSD), 1642–1646 (SSRLD), and 1647–1651 (LSRSD). The segment at 1622–1651 (QSKLDLSRSDLSRSDSSRSDSSRLDLSRSD) is 5 X 5 AA approximate repeats. Composition is skewed to basic and acidic residues over residues 1626 to 1681 (DLSR…DKDN) and 1688 to 1697 (DTEKENSIDK). The 7 X 2 AA tandem repeats of K-E stretch occupies residues 1659-1672 (KEKEKEKEKEKEKE).

It belongs to the PI3/PI4-kinase family.

The catalysed reaction is a 1,2-diacyl-sn-glycero-3-phospho-(1D-myo-inositol) + ATP = a 1,2-diacyl-sn-glycero-3-phospho-(1D-myo-inositol-3-phosphate) + ADP + H(+). The protein is Phosphatidylinositol 3-kinase 3 (pikC) of Dictyostelium discoideum (Social amoeba).